Here is a 428-residue protein sequence, read N- to C-terminus: MASSLLEEEAHYGSSPLAMLTAACSKFGGSSPLRDSTTLGKGGTKKPYADLSAPKTMGDAYPAPFSSTNGLLSPAGSPPAPASGYANDYPPFPHSFPGPTGAQDPGLLVPKGHSSSDCLPSVYTSLDMTHPYGSWYKAGIHAGISPGPGNTPTPWWDMHPGGNWLGGGQGQGDGLQGTLSTGPAQPPLNPQLPTYPSDFAPLNPAPYPAPHLLQPGPQHVLPQDVYKPKAVGNSGQLEGSGAAKPPRGAGTGGSGGYAGSGAGRSTCDCPNCQELERLGAAAAGLRKKPIHSCHIPGCGKVYGKASHLKAHLRWHTGERPFVCNWLFCGKRFTRSDELERHVRTHTREKKFTCLLCSKRFTRSDHLSKHQRTHGEPGPGPPPSGPKELGEGRSVGEEEANQPPRSSTSPAPPEKAHGGSPEQSNLLEI.

Residues 30 to 84 (SSPLRDSTTLGKGGTKKPYADLSAPKTMGDAYPAPFSSTNGLLSPAGSPPAPASG) form a disordered region. N6-propionyllysine occurs at positions 41 and 45. Lys-55 participates in a covalent cross-link: Glycyl lysine isopeptide (Lys-Gly) (interchain with G-Cter in ubiquitin). A 9aaTAD motif is present at residues 153–161 (TPWWDMHPG). Residue Lys-227 forms a Glycyl lysine isopeptide (Lys-Gly) (interchain with G-Cter in ubiquitin) linkage. The segment at 229–257 (KAVGNSGQLEGSGAAKPPRGAGTGGSGGY) is disordered. 3 C2H2-type zinc fingers span residues 291–315 (HSCHIPGCGKVYGKASHLKAHLRWH), 321–345 (FVCNWLFCGKRFTRSDELERHVRTH), and 351–373 (FTCLLCSKRFTRSDHLSKHQRTH). An N6-propionyllysine mark is found at Lys-358 and Lys-368. The interval 364-428 (DHLSKHQRTH…SPEQSNLLEI (65 aa)) is disordered.

The protein belongs to the Sp1 C2H2-type zinc-finger protein family. Interacts with RIOX1; the interaction is direct and inhibits transcription activator activity. Propionylated. Depropionylation at Lys-368 by SIRT7 activates transcription factor activity and positively regulates bone formation by osteoblasts. Post-translationally, ubiquitination at leads to proteasomal degradation. SP7 is a short-live protein with an endogenous half-life of approximately 12 hours. Osteoblast/chondrocyte specific.

It is found in the nucleus. In terms of biological role, transcriptional activator essential for osteoblast differentiation. Binds to SP1 and EKLF consensus sequences and to other G/C-rich sequences. The polypeptide is Transcription factor Sp7 (Sp7) (Mus musculus (Mouse)).